Reading from the N-terminus, the 148-residue chain is Ribonuclease pancreatic (148 aa).

The N-terminal stretch at 1 to 25 (MGLEKSLMLFPLLVLVLGLVQPSLG) is a signal peptide. The substrate site is built by K32 and R35. H37 (proton acceptor) is an active-site residue. Cystine bridges form between C50-C108, C64-C119, C82-C134, and C89-C96. Residues 65-69 (KPVNT), K90, and R109 each bind substrate. The active-site Proton donor is the H143.

This sequence belongs to the pancreatic ribonuclease family. Monomer. Interacts with and forms tight 1:1 complexes with RNH1. Dimerization of two such complexes may occur. Interaction with RNH1 inhibits this protein. Pancreas.

The protein localises to the secreted. The catalysed reaction is an [RNA] containing cytidine + H2O = an [RNA]-3'-cytidine-3'-phosphate + a 5'-hydroxy-ribonucleotide-3'-[RNA].. It carries out the reaction an [RNA] containing uridine + H2O = an [RNA]-3'-uridine-3'-phosphate + a 5'-hydroxy-ribonucleotide-3'-[RNA].. Its function is as follows. Endonuclease that catalyzes the cleavage of RNA on the 3' side of pyrimidine nucleotides. Acts on single-stranded and double-stranded RNA. The sequence is that of Ribonuclease pancreatic (RNASE1) from Gerbilliscus gambianus (Gambian gerbil).